The primary structure comprises 528 residues: Putative B3 domain-containing protein REM15 (528 aa).

2 consecutive DNA-binding regions (TF-B3) follow at residues 3-95 (HQHF…LGPS) and 135-231 (CFVA…LPNE). A disordered region spans residues 234-253 (EEANEVSLPEEPESDAERNL). 2 DNA-binding regions (TF-B3) span residues 279-376 (CFVA…IPNE) and 425-522 (QSSL…FCSK).

It is found in the nucleus. The protein is Putative B3 domain-containing protein REM15 (REM15.15) of Arabidopsis thaliana (Mouse-ear cress).